The sequence spans 679 residues: Enzymatic polyprotein (679 aa).

The tract at residues 40–130 is protease; it reads LHCFVDTGAS…LYEPFIQFTD (91 aa). The active site involves D45. Positions 272–452 constitute a Reverse transcriptase domain; it reads LKVIKPSKSP…KKINFLGLEI (181 aa).

Belongs to the caulimoviridae enzymatic polyprotein family.

It carries out the reaction DNA(n) + a 2'-deoxyribonucleoside 5'-triphosphate = DNA(n+1) + diphosphate. Functionally, encodes for at least two polypeptides: protease (PR) and reverse transcriptase (RT). The protease processes the polyprotein in cis. Reverse transcriptase is multifunctional enzyme that converts the viral RNA genome into dsDNA in viral cytoplasmic capsids. This enzyme displays a DNA polymerase activity that can copy either DNA or RNA templates, and a ribonuclease H (RNase H) activity that cleaves the RNA strand of RNA-DNA heteroduplexes in a partially processive 3'- to 5'-endonucleasic mode. Neo-synthesized pregenomic RNA (pgRNA) are encapsidated, and reverse-transcribed inside the nucleocapsid. Partial (+)DNA is synthesized from the (-)DNA template and generates the relaxed circular DNA (RC-DNA) genome. After budding and infection, the RC-DNA migrates in the nucleus, and is converted into a plasmid-like covalently closed circular DNA (cccDNA). This is Enzymatic polyprotein from Arabidopsis thaliana (Mouse-ear cress).